The chain runs to 757 residues: uncharacterized protein (757 aa).

The region spanning 640–709 is the S1 motif domain; the sequence is GMILEGVVSN…ARKRIALTMR (70 aa). Residues 710-741 show a composition bias toward basic and acidic residues; sequence LDDEPGGAKHKMPSENRSRERTAGRKPQRNDR. Positions 710–757 are disordered; the sequence is LDDEPGGAKHKMPSENRSRERTAGRKPQRNDRAPANSAMADAFAKLKR.

This is an uncharacterized protein from Neisseria meningitidis serogroup A / serotype 4A (strain DSM 15465 / Z2491).